Reading from the N-terminus, the 95-residue chain is MITPHNILRHELIGLKVEIVEAKNKAMIGIKGKVVDETRNTLVIEKEDGREVVIPKDIAVFLFQLKGCKVKVDGRLLIGRPEERLKKKIKILYPY.

It belongs to the eukaryotic/archaeal RNase P protein component 1 family. In terms of assembly, consists of a catalytic RNA component and at least 4 protein subunits. Forms a subcomplex with Rnp4 which stimulates the catalytic RNA.

The protein localises to the cytoplasm. The enzyme catalyses Endonucleolytic cleavage of RNA, removing 5'-extranucleotides from tRNA precursor.. Functionally, part of ribonuclease P, a protein complex that generates mature tRNA molecules by cleaving their 5'-ends. This Methanocaldococcus jannaschii (strain ATCC 43067 / DSM 2661 / JAL-1 / JCM 10045 / NBRC 100440) (Methanococcus jannaschii) protein is Ribonuclease P protein component 1.